The following is a 112-amino-acid chain: Nucleoid-associated protein RER_03900 (112 aa).

Belongs to the YbaB/EbfC family. In terms of assembly, homodimer.

Its subcellular location is the cytoplasm. It is found in the nucleoid. Binds to DNA and alters its conformation. May be involved in regulation of gene expression, nucleoid organization and DNA protection. The chain is Nucleoid-associated protein RER_03900 from Rhodococcus erythropolis (strain PR4 / NBRC 100887).